A 159-amino-acid polypeptide reads, in one-letter code: Ribosomal RNA large subunit methyltransferase H (159 aa).

S-adenosyl-L-methionine-binding positions include Leu-76, Gly-108, and 127 to 132 (FGLLTL).

It belongs to the RNA methyltransferase RlmH family. As to quaternary structure, homodimer.

Its subcellular location is the cytoplasm. It catalyses the reaction pseudouridine(1915) in 23S rRNA + S-adenosyl-L-methionine = N(3)-methylpseudouridine(1915) in 23S rRNA + S-adenosyl-L-homocysteine + H(+). Functionally, specifically methylates the pseudouridine at position 1915 (m3Psi1915) in 23S rRNA. This chain is Ribosomal RNA large subunit methyltransferase H, found in Streptococcus pyogenes serotype M3 (strain SSI-1).